The following is a 307-amino-acid chain: Homoserine O-acetyltransferase (307 aa).

Catalysis depends on Cys142, which acts as the Acyl-thioester intermediate. Substrate-binding residues include Lys163 and Ser192. Catalysis depends on His235, which acts as the Proton acceptor. Residue Glu237 is part of the active site. Arg249 contacts substrate.

This sequence belongs to the MetA family.

It localises to the cytoplasm. The catalysed reaction is L-homoserine + acetyl-CoA = O-acetyl-L-homoserine + CoA. The protein operates within amino-acid biosynthesis; L-methionine biosynthesis via de novo pathway; O-acetyl-L-homoserine from L-homoserine: step 1/1. Functionally, transfers an acetyl group from acetyl-CoA to L-homoserine, forming acetyl-L-homoserine. The chain is Homoserine O-acetyltransferase from Rhizobium johnstonii (strain DSM 114642 / LMG 32736 / 3841) (Rhizobium leguminosarum bv. viciae).